The sequence spans 486 residues: PTS system N-acetylmuramic acid-specific EIIBC component (486 aa).

One can recognise a PTS EIIB type-1 domain in the interval 1–89; it reads MAKITQTMIS…NKLIESVING (89 aa). Cys-28 serves as the catalytic Phosphocysteine intermediate; for EIIB activity. Positions 127-486 constitute a PTS EIIC type-1 domain; sequence SKFATIFTPL…FFGSKDVDLS (360 aa). 10 helical membrane passes run 129 to 149, 170 to 190, 196 to 216, 230 to 250, 268 to 288, 312 to 332, 347 to 367, 381 to 401, 411 to 431, and 453 to 473; these read FATI…LLGF, LIAY…ILIG, AFGG…LGYN, FFGY…AAII, MILT…VVIM, AAIL…QGFV, LFPI…ALYF, GAII…VTLP, IGGA…LPVG, and IFAG…VGFL.

The protein localises to the cell inner membrane. It catalyses the reaction N-acetyl-beta-D-muramate(out) + N(pros)-phospho-L-histidyl-[protein] = N-acetyl-beta-D-muramate 6-phosphate(in) + L-histidyl-[protein]. Its function is as follows. The phosphoenolpyruvate-dependent sugar phosphotransferase system (sugar PTS), a major carbohydrate active transport system, catalyzes the phosphorylation of incoming sugar substrates concomitantly with their translocation across the cell membrane. This system is involved in N-acetylmuramic acid (MurNAc) transport, yielding cytoplasmic MurNAc-6-P. Is also able to take up anhydro-N-acetylmuramic acid (anhMurNAc), but cannot phosphorylate the carbon 6, probably because of the 1,6-anhydro ring. This Vibrio vulnificus (strain YJ016) protein is PTS system N-acetylmuramic acid-specific EIIBC component (murP).